A 139-amino-acid chain; its full sequence is Intrinsically disordered protein, expressed in pharynx 15 (139 aa).

Residues M1–T12 show a composition bias toward polar residues. The tract at residues M1 to S98 is disordered. Low complexity-rich tracts occupy residues T13 to T41 and Q49 to S98.

This chain is Intrinsically disordered protein, expressed in pharynx 15, found in Caenorhabditis elegans.